The following is a 404-amino-acid chain: Probable tRNA sulfurtransferase (404 aa).

Residues 61 to 166 (EAVSERLKDV…SGYSYIMCDE (106 aa)) enclose the THUMP domain. ATP is bound by residues 184–185 (LL), 209–210 (HF), Arg266, Gly288, and Gln297.

Belongs to the ThiI family.

It is found in the cytoplasm. It carries out the reaction [ThiI sulfur-carrier protein]-S-sulfanyl-L-cysteine + a uridine in tRNA + 2 reduced [2Fe-2S]-[ferredoxin] + ATP + H(+) = [ThiI sulfur-carrier protein]-L-cysteine + a 4-thiouridine in tRNA + 2 oxidized [2Fe-2S]-[ferredoxin] + AMP + diphosphate. The catalysed reaction is [ThiS sulfur-carrier protein]-C-terminal Gly-Gly-AMP + S-sulfanyl-L-cysteinyl-[cysteine desulfurase] + AH2 = [ThiS sulfur-carrier protein]-C-terminal-Gly-aminoethanethioate + L-cysteinyl-[cysteine desulfurase] + A + AMP + 2 H(+). Its pathway is cofactor biosynthesis; thiamine diphosphate biosynthesis. Catalyzes the ATP-dependent transfer of a sulfur to tRNA to produce 4-thiouridine in position 8 of tRNAs, which functions as a near-UV photosensor. Also catalyzes the transfer of sulfur to the sulfur carrier protein ThiS, forming ThiS-thiocarboxylate. This is a step in the synthesis of thiazole, in the thiamine biosynthesis pathway. The sulfur is donated as persulfide by IscS. This chain is Probable tRNA sulfurtransferase, found in Bacillus cereus (strain ATCC 10987 / NRS 248).